The primary structure comprises 149 residues: D-aminoacyl-tRNA deacylase (149 aa).

Residues 137-138 carry the Gly-cisPro motif, important for rejection of L-amino acids motif; that stretch reads GP.

This sequence belongs to the DTD family. In terms of assembly, homodimer.

It is found in the cytoplasm. It catalyses the reaction glycyl-tRNA(Ala) + H2O = tRNA(Ala) + glycine + H(+). The catalysed reaction is a D-aminoacyl-tRNA + H2O = a tRNA + a D-alpha-amino acid + H(+). An aminoacyl-tRNA editing enzyme that deacylates mischarged D-aminoacyl-tRNAs. Also deacylates mischarged glycyl-tRNA(Ala), protecting cells against glycine mischarging by AlaRS. Acts via tRNA-based rather than protein-based catalysis; rejects L-amino acids rather than detecting D-amino acids in the active site. By recycling D-aminoacyl-tRNA to D-amino acids and free tRNA molecules, this enzyme counteracts the toxicity associated with the formation of D-aminoacyl-tRNA entities in vivo and helps enforce protein L-homochirality. The polypeptide is D-aminoacyl-tRNA deacylase (Syntrophus aciditrophicus (strain SB)).